The following is a 170-amino-acid chain: Photosystem I assembly protein Ycf3 (170 aa).

3 TPR repeats span residues 35–68 (AFTYYRDGMLAQSEGNYAEALQNYYEATRLEIDP), 72–105 (SYILYNIGLIHTSNGEHTKALEYYFRALERNPFL), and 120–153 (GEQAILQGDSEIAEAWFDQAAEYWKQAIALTPGN).

The protein belongs to the Ycf3 family.

It localises to the plastid. It is found in the chloroplast thylakoid membrane. In terms of biological role, essential for the assembly of the photosystem I (PSI) complex. May act as a chaperone-like factor to guide the assembly of the PSI subunits. The sequence is that of Photosystem I assembly protein Ycf3 from Saccharum officinarum (Sugarcane).